We begin with the raw amino-acid sequence, 183 residues long: Protein jagunal homolog 1 (183 aa).

The Cytoplasmic segment spans residues 1–39 (MASRAGPRAAGTDGSDFQHRERVAMHYQMSVTLKYEIKK). A Phosphoserine modification is found at S3. The chain crosses the membrane as a helical span at residues 40–60 (LIYVHLVIWLLLVAKMSVGHL). Residues 61–71 (RLLSHDQVAMP) lie on the Lumenal side of the membrane. A helical transmembrane segment spans residues 72-92 (YQWEYPYLLSIVPSVLGLLSF). Residues 93–96 (PRNN) are Cytoplasmic-facing. The chain crosses the membrane as a helical span at residues 97–117 (ISYLVLSMISMGLFSIAPLIY). Residues 118 to 137 (GSMEMFPAAQQLYRHGKAYR) are Lumenal-facing. Residues 138-158 (FLFGFSAVSVMYLVLVLAVQV) form a helical membrane-spanning segment. Residues 159–183 (HAWQLYYSKKLLDSWFTSTQEKKRK) are Cytoplasmic-facing.

This sequence belongs to the jagunal family. In terms of assembly, interacts with COPA, COPB2 and COPG2.

The protein localises to the endoplasmic reticulum membrane. Its function is as follows. Endoplasmic reticulum transmembrane protein involved in vesicle-mediated transport, which is required for neutrophil function. Required for vesicle-mediated transport; it is however unclear whether it is involved in early secretory pathway or intracellular protein transport. Acts as a regulator of neutrophil function, probably via its role in vesicle-mediated transport: required for defense against fungal pathogens and for granulocyte colony-stimulating factor (GM-CSF) signaling pathway; possibly by regulating glycosylation and/or targeting of proteins contributing to the viability and migration of neutrophils. The polypeptide is Protein jagunal homolog 1 (Mus musculus (Mouse)).